A 406-amino-acid polypeptide reads, in one-letter code: MSGCPYFQRKFLSTSKQHLKEEENDEAQTGINKASKGGLIYGDYLQLDKIVTSQVLQSELKGNKIHDEHLFIVTHQAYELWFKQVLWELDSVREIFISGHVRDERNMLKVNTRIHRIVMIFRLLLDQFAVLETMTALDFYDFREYLSPASGFQSLQFRLLENKIGVPHNQRVPYNRRHYRDNFRDQESELLLHSEQEPTLLQLVEQWLERTPGLEEDGFNFWGKLEKNIFEGLRREKEHIEQKPASERKEEMLAELIKQRDIFLSLFDEKRHDHLVSTGQRRLSYKALQGALMIYFYREEPRFQVPFQLLTSLMDIDTLMTKWRYNHVCMVHRMIGSKDGTGGSSGYQYLRSTVSDRYKVFVDLFNLATFLIPRDWVPKLDPSEHTFLYMAECCDSSYCSSSDDSD.

Substrate-binding positions include 71-75 and arginine 143; that span reads FIVTH. Heme is bound at residue histidine 327. Residue threonine 341 participates in substrate binding.

It belongs to the tryptophan 2,3-dioxygenase family. In terms of assembly, homotetramer. Dimer of dimers. Requires heme as cofactor.

It carries out the reaction L-tryptophan + O2 = N-formyl-L-kynurenine. The protein operates within amino-acid degradation; L-tryptophan degradation via kynurenine pathway; L-kynurenine from L-tryptophan: step 1/2. In terms of biological role, heme-dependent dioxygenase that catalyzes the oxidative cleavage of the L-tryptophan (L-Trp) pyrrole ring and converts L-tryptophan to N-formyl-L-kynurenine. Catalyzes the oxidative cleavage of the indole moiety. This chain is Tryptophan 2,3-dioxygenase A, found in Danio rerio (Zebrafish).